We begin with the raw amino-acid sequence, 436 residues long: Calcium/calmodulin-regulated receptor-like kinase 2 (436 aa).

The chain crosses the membrane as a helical span at residues leucine 7–tyrosine 34. A disordered region spans residues aspartate 65 to asparagine 88. Positions threonine 69–asparagine 88 are enriched in polar residues. The Protein kinase domain maps to glutamine 114–isoleucine 375. ATP contacts are provided by residues leucine 120–valine 128 and lysine 142. Phosphotyrosine is present on tyrosine 187. Aspartate 239 acts as the Proton acceptor in catalysis. Residue threonine 276 is modified to Phosphothreonine. Tyrosine 284 is modified (phosphotyrosine).

It belongs to the protein kinase superfamily. Ser/Thr protein kinase family.

The protein localises to the cell membrane. The enzyme catalyses L-seryl-[protein] + ATP = O-phospho-L-seryl-[protein] + ADP + H(+). It carries out the reaction L-threonyl-[protein] + ATP = O-phospho-L-threonyl-[protein] + ADP + H(+). In Arabidopsis thaliana (Mouse-ear cress), this protein is Calcium/calmodulin-regulated receptor-like kinase 2.